Here is a 94-residue protein sequence, read N- to C-terminus: Small ribosomal subunit protein uS19 (94 aa).

It belongs to the universal ribosomal protein uS19 family.

Functionally, protein S19 forms a complex with S13 that binds strongly to the 16S ribosomal RNA. This is Small ribosomal subunit protein uS19 from Wolbachia sp. subsp. Brugia malayi (strain TRS).